The primary structure comprises 79 residues: Acyl carrier protein (79 aa).

Residues 2–77 enclose the Carrier domain; sequence SDIEARVKKI…NAIDYANTHQ (76 aa). An O-(pantetheine 4'-phosphoryl)serine modification is found at S37.

The protein belongs to the acyl carrier protein (ACP) family. Post-translationally, 4'-phosphopantetheine is transferred from CoA to a specific serine of apo-ACP by AcpS. This modification is essential for activity because fatty acids are bound in thioester linkage to the sulfhydryl of the prosthetic group.

The protein localises to the cytoplasm. Its pathway is lipid metabolism; fatty acid biosynthesis. Its function is as follows. Carrier of the growing fatty acid chain in fatty acid biosynthesis. The protein is Acyl carrier protein of Paracidovorax citrulli (strain AAC00-1) (Acidovorax citrulli).